Here is a 237-residue protein sequence, read N- to C-terminus: 3-oxoacyl-[acyl-carrier-protein] reductase (237 aa).

Met1 bears the N-acetylmethionine mark. Residues Ser11–Ile14 and Arg34–Asn35 contribute to the NADP(+) site. Lys40 carries the post-translational modification N6-acetyllysine. Residues Asp56 and Ala83–Gly85 contribute to the NADP(+) site. N6-acetyllysine is present on Lys96. Ser135 provides a ligand contact to substrate. NADP(+)-binding positions include Tyr148, Lys152, and Val181 to Thr183. Tyr148 serves as the catalytic Proton acceptor. N6-acetyllysine is present on Lys195.

This sequence belongs to the short-chain dehydrogenases/reductases (SDR) family. Homotetramer (in vitro). Heterotetramer with HSD17B8; contains two molecules each of HSD17B8 and CBR4. Does not form homotetramers when HSD17B8 is coexpressed, only heterotetramers (in vitro). Detected in liver and kidney (at protein level). Displays the highest expression in neuronal and muscle tissues.

The protein resides in the mitochondrion matrix. The enzyme catalyses a (3R)-hydroxyacyl-[ACP] + NADP(+) = a 3-oxoacyl-[ACP] + NADPH + H(+). It carries out the reaction a quinone + NADPH + H(+) = a quinol + NADP(+). It participates in lipid metabolism; fatty acid biosynthesis. In terms of biological role, component of the heterotetramer complex KAR (3-ketoacyl-[acyl carrier protein] reductase or 3-ketoacyl-[ACP] reductase) that forms part of the mitochondrial fatty acid synthase (mtFAS). Beta-subunit of the KAR heterotetramer complex, responsible for the 3-ketoacyl-ACP reductase activity of the mtFAS, reduces 3-oxoacyl-[ACP] to (3R)-hydroxyacyl-[ACP] in a NADPH-dependent manner with no chain length preference, thereby participating in mitochondrial fatty acid biosynthesis. The homotetramer has NADPH-dependent quinone reductase activity (in vitro), hence could play a role in protection against cytotoxicity of exogenous quinones. As a heterotetramer, it can also reduce 9,10-phenanthrenequinone, 1,4-benzoquinone and various other o-quinones and p-quinones (in vitro). The chain is 3-oxoacyl-[acyl-carrier-protein] reductase (CBR4) from Homo sapiens (Human).